We begin with the raw amino-acid sequence, 457 residues long: Multidrug resistance protein MdtK (457 aa).

A run of 12 helical transmembrane segments spans residues 11–31 (LLAL…MGFV), 53–73 (IWLP…PVIA), 93–113 (WLAS…GYII), 127–147 (AVGY…FQVA), 160–180 (GMVM…IFIY), 188–208 (LGGI…FIAM), 243–263 (LPIA…ALLV), 276–296 (IALN…AAVT), 314–334 (AART…IFTV), 357–377 (LMLL…GSGI), 387–407 (IFFI…YILA), and 418–438 (PAGF…LMML).

Belongs to the multi antimicrobial extrusion (MATE) (TC 2.A.66.1) family. MdtK subfamily.

The protein localises to the cell inner membrane. In terms of biological role, multidrug efflux pump that functions probably as a Na(+)/drug antiporter. This Salmonella arizonae (strain ATCC BAA-731 / CDC346-86 / RSK2980) protein is Multidrug resistance protein MdtK.